The following is a 441-amino-acid chain: Ribosomal protein uS12 methylthiotransferase RimO (441 aa).

The 111-residue stretch at Gln-6–Pro-116 folds into the MTTase N-terminal domain. Residues Cys-15, Cys-51, Cys-80, Cys-147, Cys-151, and Cys-154 each coordinate [4Fe-4S] cluster. In terms of domain architecture, Radical SAM core spans Leu-133–Arg-370. The 67-residue stretch at Ala-373 to Gly-439 folds into the TRAM domain.

Belongs to the methylthiotransferase family. RimO subfamily. The cofactor is [4Fe-4S] cluster.

The protein localises to the cytoplasm. It catalyses the reaction L-aspartate(89)-[ribosomal protein uS12]-hydrogen + (sulfur carrier)-SH + AH2 + 2 S-adenosyl-L-methionine = 3-methylsulfanyl-L-aspartate(89)-[ribosomal protein uS12]-hydrogen + (sulfur carrier)-H + 5'-deoxyadenosine + L-methionine + A + S-adenosyl-L-homocysteine + 2 H(+). Functionally, catalyzes the methylthiolation of an aspartic acid residue of ribosomal protein uS12. The sequence is that of Ribosomal protein uS12 methylthiotransferase RimO from Rhodospirillum rubrum (strain ATCC 11170 / ATH 1.1.1 / DSM 467 / LMG 4362 / NCIMB 8255 / S1).